The sequence spans 574 residues: Proline--tRNA ligase (574 aa).

Belongs to the class-II aminoacyl-tRNA synthetase family. ProS type 1 subfamily. Homodimer.

The protein resides in the cytoplasm. The enzyme catalyses tRNA(Pro) + L-proline + ATP = L-prolyl-tRNA(Pro) + AMP + diphosphate. Functionally, catalyzes the attachment of proline to tRNA(Pro) in a two-step reaction: proline is first activated by ATP to form Pro-AMP and then transferred to the acceptor end of tRNA(Pro). As ProRS can inadvertently accommodate and process non-cognate amino acids such as alanine and cysteine, to avoid such errors it has two additional distinct editing activities against alanine. One activity is designated as 'pretransfer' editing and involves the tRNA(Pro)-independent hydrolysis of activated Ala-AMP. The other activity is designated 'posttransfer' editing and involves deacylation of mischarged Ala-tRNA(Pro). The misacylated Cys-tRNA(Pro) is not edited by ProRS. The protein is Proline--tRNA ligase of Nautilia profundicola (strain ATCC BAA-1463 / DSM 18972 / AmH).